A 515-amino-acid chain; its full sequence is Serine--tRNA ligase, cytoplasmic (515 aa).

An interaction with tRNA region spans residues 9 to 61 (RTDKGGDPEIIRETQRKRFKDVSLVDKLVQADTEWRKCRFTADNLNKAKNLCS). Positions 271 and 302 each coordinate L-serine. Residues 302-304 (RQE) and 318-321 (VHQF) each bind ATP. An L-serine-binding site is contributed by E325. Residue 391-394 (ELVS) coordinates ATP. N427 contacts L-serine. Residues 475–515 (PIDQETTKKQKKQQEGGKKKKHQGGDADLENKVENMSVNDS) are disordered. The span at 479 to 507 (ETTKKQKKQQEGGKKKKHQGGDADLENKV) shows a compositional bias: basic and acidic residues. Positions 482 to 494 (KKQKKQQEGGKKK) match the Nuclear localization signal motif.

It belongs to the class-II aminoacyl-tRNA synthetase family. Type-1 seryl-tRNA synthetase subfamily.

The protein localises to the cytoplasm. Its subcellular location is the nucleus. The enzyme catalyses tRNA(Ser) + L-serine + ATP = L-seryl-tRNA(Ser) + AMP + diphosphate + H(+). The catalysed reaction is tRNA(Sec) + L-serine + ATP = L-seryl-tRNA(Sec) + AMP + diphosphate + H(+). In terms of biological role, catalyzes the attachment of serine to tRNA(Ser) in a two-step reaction: serine is first activated by ATP to form Ser-AMP and then transferred to the acceptor end of tRNA(Ser). Is probably also able to aminoacylate tRNA(Sec) with serine, to form the misacylated tRNA L-seryl-tRNA(Sec), which will be further converted into selenocysteinyl-tRNA(Sec). In the nucleus, binds to the vegfa core promoter and prevents myc binding and transcriptional activation by myc. Thereby inhibits the production of vegfa and sprouting angiogenesis mediated by vegfa. The protein is Serine--tRNA ligase, cytoplasmic (sars1) of Danio rerio (Zebrafish).